Consider the following 407-residue polypeptide: Phosphoglycerate kinase (407 aa).

Substrate contacts are provided by residues 21–23 (DLN), R36, 59–62 (HQGR), R116, and R156. ATP is bound by residues E332 and 358-361 (GGDT).

The protein belongs to the phosphoglycerate kinase family. In terms of assembly, monomer.

The protein localises to the cytoplasm. The catalysed reaction is (2R)-3-phosphoglycerate + ATP = (2R)-3-phospho-glyceroyl phosphate + ADP. It functions in the pathway carbohydrate degradation; glycolysis; pyruvate from D-glyceraldehyde 3-phosphate: step 2/5. This Halorubrum lacusprofundi (strain ATCC 49239 / DSM 5036 / JCM 8891 / ACAM 34) protein is Phosphoglycerate kinase.